A 278-amino-acid polypeptide reads, in one-letter code: MKKRMLDVLMLVIGAFFFALAVNLFAIPNDLGEGGVTGITLILYYLFQWSPGVTNFILNAFLLLIGYKFLDGKTTVYTIIAVAANSLFLHLTHGWSIPSDELIINTIFAGVFAGVGIGMIIRVGGTTAGSAILARIANKYLDWNISYALLFFDLIVVFSSYFIIGAEKMMFTIVMLYIGTKVMDFIIEGLNTKKAITVISENKSEIAEQVNTLMDRGVTILSGKGNYTGQSKEILYIVINKQELSMLKKIIRSCDKKAFVIVHDVRDVFGEGFVDISK.

A run of 5 helical transmembrane segments spans residues 8–28, 46–66, 77–97, 101–121, and 145–165; these read VLMLVIGAFFFALAVNLFAIP, LFQWSPGVTNFILNAFLLLIG, YTIIAVAANSLFLHLTHGWSI, ELIINTIFAGVFAGVGIGMII, and ISYALLFFDLIVVFSSYFIIG.

It belongs to the UPF0750 family.

Its subcellular location is the cell membrane. In Bacillus subtilis (strain 168), this protein is UPF0750 membrane protein YxkD (yxkD).